We begin with the raw amino-acid sequence, 661 residues long: UvrABC system protein B (661 aa).

The Helicase ATP-binding domain occupies 23–180; it reads EGLQKGYRIQ…THLARIGYER (158 aa). 36–43 contributes to the ATP binding site; the sequence is GVTGSGKT. The short motif at 89–112 is the Beta-hairpin element; it reads YYDYYQPEAYIPTRDLYIEKNADI. In terms of domain architecture, Helicase C-terminal spans 426 to 592; that stretch reads QIDDLVNEIA…TIIKPLDEEI (167 aa). Residues 620 to 655 form the UVR domain; the sequence is EEYIALLEEEMYKAASELRYEDAARLRDELFNIREK.

Belongs to the UvrB family. Forms a heterotetramer with UvrA during the search for lesions. Interacts with UvrC in an incision complex.

It is found in the cytoplasm. Functionally, the UvrABC repair system catalyzes the recognition and processing of DNA lesions. A damage recognition complex composed of 2 UvrA and 2 UvrB subunits scans DNA for abnormalities. Upon binding of the UvrA(2)B(2) complex to a putative damaged site, the DNA wraps around one UvrB monomer. DNA wrap is dependent on ATP binding by UvrB and probably causes local melting of the DNA helix, facilitating insertion of UvrB beta-hairpin between the DNA strands. Then UvrB probes one DNA strand for the presence of a lesion. If a lesion is found the UvrA subunits dissociate and the UvrB-DNA preincision complex is formed. This complex is subsequently bound by UvrC and the second UvrB is released. If no lesion is found, the DNA wraps around the other UvrB subunit that will check the other stand for damage. The chain is UvrABC system protein B from Thermosipho africanus (strain TCF52B).